The following is a 217-amino-acid chain: Transcriptional regulator NovE (217 aa).

Residues 1-41 form a disordered region; it reads MVASGRTASKGRGNGATPVRPTAGDATPVDSGQPSDTTYGG.

In terms of biological role, transcription regulator that specifically regulates expression of genes involved in the novobiocin biosynthesis pathway. Probably acts as a positive regulator of transcription. Does not bind DNA. This chain is Transcriptional regulator NovE (novE), found in Streptomyces niveus (Streptomyces spheroides).